A 427-amino-acid chain; its full sequence is Phosphoribosylamine--glycine ligase (427 aa).

The ATP-grasp domain occupies 109–313 (RNLMAEYKIE…LAEVVTGITE (205 aa)). Residue 136–191 (VRDHDGDLAVKPIGLTGGKGVRIMGEQVDRAGAIEYIREINGGVVLEERLTGEEFT) coordinates ATP. Residues Gln271, Glu283, and Asn285 each contribute to the Mg(2+) site. The Mn(2+) site is built by Gln271, Glu283, and Asn285.

This sequence belongs to the GARS family. The cofactor is Mg(2+). Requires Mn(2+) as cofactor.

It carries out the reaction 5-phospho-beta-D-ribosylamine + glycine + ATP = N(1)-(5-phospho-beta-D-ribosyl)glycinamide + ADP + phosphate + H(+). The protein operates within purine metabolism; IMP biosynthesis via de novo pathway; N(1)-(5-phospho-D-ribosyl)glycinamide from 5-phospho-alpha-D-ribose 1-diphosphate: step 2/2. The sequence is that of Phosphoribosylamine--glycine ligase from Methanoregula boonei (strain DSM 21154 / JCM 14090 / 6A8).